Consider the following 614-residue polypeptide: Pyrophosphate--fructose 6-phosphate 1-phosphotransferase subunit alpha 1 (614 aa).

Belongs to the phosphofructokinase type A (PFKA) family. PPi-dependent PFK group II subfamily. Clade 'Long' sub-subfamily. Tetramer of two alpha (regulatory) and two beta (catalytic) chains. Expressed in leaves, roots, and flowers (e.g. sepals, petals, stamen and gynoecium).

The protein localises to the cytoplasm. Its pathway is carbohydrate degradation; glycolysis; D-glyceraldehyde 3-phosphate and glycerone phosphate from D-glucose: step 3/4. With respect to regulation, allosterically activated by fructose 2,6-bisphosphate. Functionally, regulatory subunit of pyrophosphate--fructose 6-phosphate 1-phosphotransferase. The sequence is that of Pyrophosphate--fructose 6-phosphate 1-phosphotransferase subunit alpha 1 from Arabidopsis thaliana (Mouse-ear cress).